Reading from the N-terminus, the 125-residue chain is Holo-[acyl-carrier-protein] synthase (125 aa).

Residues Asp8 and Glu57 each contribute to the Mg(2+) site.

It belongs to the P-Pant transferase superfamily. AcpS family. Requires Mg(2+) as cofactor.

The protein resides in the cytoplasm. The enzyme catalyses apo-[ACP] + CoA = holo-[ACP] + adenosine 3',5'-bisphosphate + H(+). In terms of biological role, transfers the 4'-phosphopantetheine moiety from coenzyme A to a Ser of acyl-carrier-protein. The chain is Holo-[acyl-carrier-protein] synthase from Natranaerobius thermophilus (strain ATCC BAA-1301 / DSM 18059 / JW/NM-WN-LF).